The chain runs to 395 residues: RNA pseudouridine synthase 7 (395 aa).

Residues 1–21 (MKRKQQEDDNDDGVEKAVSPV) are disordered. Residues 74-136 (KTIVDLFADE…HEPPVMIDDV (63 aa)) form the S4 RNA-binding domain. Residue Asp-187 is part of the active site. Over residues 244 to 255 (EGRSTAEDANSS) the composition is skewed to polar residues. Residues 244–263 (EGRSTAEDANSSGDDKKVKG) form a disordered region.

It belongs to the pseudouridine synthase RluA family.

The enzyme catalyses a uridine in RNA = a pseudouridine in RNA. The chain is RNA pseudouridine synthase 7 from Arabidopsis thaliana (Mouse-ear cress).